Consider the following 105-residue polypeptide: Late embryogenesis abundant protein Lea5-D (105 aa).

A disordered region spans residues 48 to 67; that stretch reads KVERRDAMKESSSSETRAYS. Low complexity predominate over residues 57–67; that stretch reads ESSSSETRAYS.

The protein belongs to the LEA type 3 family.

In Gossypium hirsutum (Upland cotton), this protein is Late embryogenesis abundant protein Lea5-D (LEA5-D).